A 364-amino-acid polypeptide reads, in one-letter code: DNA replication and repair protein RecF (364 aa).

Residue 33 to 40 participates in ATP binding; it reads GENGSGKT.

It belongs to the RecF family.

It is found in the cytoplasm. Its function is as follows. The RecF protein is involved in DNA metabolism; it is required for DNA replication and normal SOS inducibility. RecF binds preferentially to single-stranded, linear DNA. It also seems to bind ATP. This Rickettsia felis (strain ATCC VR-1525 / URRWXCal2) (Rickettsia azadi) protein is DNA replication and repair protein RecF.